Here is a 473-residue protein sequence, read N- to C-terminus: NAC domain-containing protein 68 (473 aa).

The 151-residue stretch at 4-154 (GLIGYRFSPT…KYVVCQVKYK (151 aa)) folds into the NAC domain. A DNA-binding region spans residues 108–160 (IGIKKTLVYHEGKSPHGVRTPWVMHEYHITCLPHHKRKYVVCQVKYKGEAAEI). Residues 326–380 (DHMPRKPVTGTIDYSSDSGSDAGSISTTSYQGTSSPNISVGSSSRHLSSCSSTDS) are disordered. 2 stretches are compositionally biased toward low complexity: residues 340–354 (SSDS…STTS) and 364–379 (SVGS…SSTD). The chain crosses the membrane as a helical span at residues 446–468 (FIYLMKMIIGNIISVLLPVKRLI).

It is found in the membrane. The protein localises to the nucleus. In terms of biological role, transcription activator activated by proteolytic cleavage through regulated intramembrane proteolysis (RIP) mediated by calpain or its functional homolog. Regulates cytokinin signaling during cell division. The sequence is that of NAC domain-containing protein 68 (NAC68) from Arabidopsis thaliana (Mouse-ear cress).